The chain runs to 125 residues: uncharacterized protein (125 aa).

This is an uncharacterized protein from Microplitis demolitor (Parasitoid wasp).